The chain runs to 184 residues: ATP synthase subunit b, chloroplastic (184 aa).

The chain crosses the membrane as a helical span at residues 27 to 49; the sequence is LATNPINLSVVLGVLIFFGKGVL.

The protein belongs to the ATPase B chain family. As to quaternary structure, F-type ATPases have 2 components, F(1) - the catalytic core - and F(0) - the membrane proton channel. F(1) has five subunits: alpha(3), beta(3), gamma(1), delta(1), epsilon(1). F(0) has four main subunits: a(1), b(1), b'(1) and c(10-14). The alpha and beta chains form an alternating ring which encloses part of the gamma chain. F(1) is attached to F(0) by a central stalk formed by the gamma and epsilon chains, while a peripheral stalk is formed by the delta, b and b' chains.

It is found in the plastid. The protein resides in the chloroplast thylakoid membrane. Its function is as follows. F(1)F(0) ATP synthase produces ATP from ADP in the presence of a proton or sodium gradient. F-type ATPases consist of two structural domains, F(1) containing the extramembraneous catalytic core and F(0) containing the membrane proton channel, linked together by a central stalk and a peripheral stalk. During catalysis, ATP synthesis in the catalytic domain of F(1) is coupled via a rotary mechanism of the central stalk subunits to proton translocation. In terms of biological role, component of the F(0) channel, it forms part of the peripheral stalk, linking F(1) to F(0). This Citrus sinensis (Sweet orange) protein is ATP synthase subunit b, chloroplastic.